A 290-amino-acid polypeptide reads, in one-letter code: Acetyl-coenzyme A carboxylase carboxyl transferase subunit beta (290 aa).

Residues 27 to 290 (LWHKCPSCEA…FTHSPSPVSA (264 aa)) form the CoA carboxyltransferase N-terminal domain. 4 residues coordinate Zn(2+): cysteine 31, cysteine 34, cysteine 50, and cysteine 53. The segment at 31-53 (CPSCEAVLYRPELEKTLDVCPKC) adopts a C4-type zinc-finger fold.

It belongs to the AccD/PCCB family. Acetyl-CoA carboxylase is a heterohexamer composed of biotin carboxyl carrier protein (AccB), biotin carboxylase (AccC) and two subunits each of ACCase subunit alpha (AccA) and ACCase subunit beta (AccD). It depends on Zn(2+) as a cofactor.

It localises to the cytoplasm. The enzyme catalyses N(6)-carboxybiotinyl-L-lysyl-[protein] + acetyl-CoA = N(6)-biotinyl-L-lysyl-[protein] + malonyl-CoA. It participates in lipid metabolism; malonyl-CoA biosynthesis; malonyl-CoA from acetyl-CoA: step 1/1. Its function is as follows. Component of the acetyl coenzyme A carboxylase (ACC) complex. Biotin carboxylase (BC) catalyzes the carboxylation of biotin on its carrier protein (BCCP) and then the CO(2) group is transferred by the transcarboxylase to acetyl-CoA to form malonyl-CoA. This is Acetyl-coenzyme A carboxylase carboxyl transferase subunit beta from Pseudomonas aeruginosa (strain UCBPP-PA14).